Here is a 490-residue protein sequence, read N- to C-terminus: Betaine aldehyde dehydrogenase (490 aa).

The K(+) site is built by Ser26, Ile27, and Asp93. 150 to 152 (GAW) contributes to the NAD(+) binding site. Catalysis depends on Lys162, which acts as the Charge relay system. 176–179 (KPSE) is an NAD(+) binding site. Val180 provides a ligand contact to K(+). Residue 230–233 (GTVT) participates in NAD(+) binding. Leu246 provides a ligand contact to K(+). The active-site Proton acceptor is the Glu252. Gly254, Cys286, and Glu387 together coordinate NAD(+). Cys286 acts as the Nucleophile in catalysis. At Cys286 the chain carries Cysteine sulfenic acid (-SOH). Positions 457 and 460 each coordinate K(+). Catalysis depends on Glu464, which acts as the Charge relay system.

This sequence belongs to the aldehyde dehydrogenase family. In terms of assembly, dimer of dimers. Requires K(+) as cofactor.

The catalysed reaction is betaine aldehyde + NAD(+) + H2O = glycine betaine + NADH + 2 H(+). It participates in amine and polyamine biosynthesis; betaine biosynthesis via choline pathway; betaine from betaine aldehyde: step 1/1. In terms of biological role, involved in the biosynthesis of the osmoprotectant glycine betaine. Catalyzes the irreversible oxidation of betaine aldehyde to the corresponding acid. The chain is Betaine aldehyde dehydrogenase from Ectopseudomonas mendocina (strain ymp) (Pseudomonas mendocina).